The chain runs to 262 residues: Small ribosomal subunit protein uS2 (262 aa).

This sequence belongs to the universal ribosomal protein uS2 family.

The protein is Small ribosomal subunit protein uS2 of Roseiflexus sp. (strain RS-1).